The chain runs to 223 residues: Ribonuclease 3 (223 aa).

An RNase III domain is found at 4 to 127 (YSQLEKRLNY…IIGAVYLEAG (124 aa)). A Mg(2+)-binding site is contributed by Glu-40. The active site involves Asp-44. Mg(2+)-binding residues include Asn-113 and Glu-116. Residue Glu-116 is part of the active site. Positions 154–223 (DYKTALQELT…AKIALEALKK (70 aa)) constitute a DRBM domain.

It belongs to the ribonuclease III family. As to quaternary structure, homodimer. Requires Mg(2+) as cofactor.

It localises to the cytoplasm. It catalyses the reaction Endonucleolytic cleavage to 5'-phosphomonoester.. Its function is as follows. Digests double-stranded RNA. Involved in the processing of primary rRNA transcript to yield the immediate precursors to the large and small rRNAs (23S and 16S). Processes some mRNAs, and tRNAs when they are encoded in the rRNA operon. Processes pre-crRNA and tracrRNA of type II CRISPR loci if present in the organism. The protein is Ribonuclease 3 of Sulfurovum sp. (strain NBC37-1).